We begin with the raw amino-acid sequence, 187 residues long: Pterin-4-alpha-carbinolamine dehydratase 2, mitochondrial (187 aa).

The transit peptide at 1-33 directs the protein to the mitochondrion; sequence MSRLLLPKLFSISRTQVPAASLFNNLYRRHKRF.

Belongs to the pterin-4-alpha-carbinolamine dehydratase family.

The protein resides in the mitochondrion. It catalyses the reaction (4aS,6R)-4a-hydroxy-L-erythro-5,6,7,8-tetrahydrobiopterin = (6R)-L-erythro-6,7-dihydrobiopterin + H2O. Its function is as follows. Involved in tetrahydrobiopterin biosynthesis. Possesses pterin-4-alpha-carbinolamine dehydratase activity when expressed in a bacterial heterolgous system. The chain is Pterin-4-alpha-carbinolamine dehydratase 2, mitochondrial from Arabidopsis thaliana (Mouse-ear cress).